We begin with the raw amino-acid sequence, 185 residues long: Small ribosomal subunit protein uS7 (185 aa).

The protein belongs to the universal ribosomal protein uS7 family. As to quaternary structure, part of the 30S ribosomal subunit.

One of the primary rRNA binding proteins, it binds directly to 16S rRNA where it nucleates assembly of the head domain of the 30S subunit. Is located at the subunit interface close to the decoding center. This is Small ribosomal subunit protein uS7 from Methanosarcina barkeri (strain Fusaro / DSM 804).